A 327-amino-acid chain; its full sequence is Phenylalanine--tRNA ligase alpha subunit (327 aa).

A Mg(2+)-binding site is contributed by Glu252.

This sequence belongs to the class-II aminoacyl-tRNA synthetase family. Phe-tRNA synthetase alpha subunit type 1 subfamily. Tetramer of two alpha and two beta subunits. Mg(2+) is required as a cofactor.

The protein localises to the cytoplasm. It carries out the reaction tRNA(Phe) + L-phenylalanine + ATP = L-phenylalanyl-tRNA(Phe) + AMP + diphosphate + H(+). The chain is Phenylalanine--tRNA ligase alpha subunit from Shigella flexneri.